The sequence spans 89 residues: cAMP-regulated phosphoprotein 21 (89 aa).

The disordered stretch occupies residues 1-89 (MSEQGDLNQA…GGESLQDQTL (89 aa)). S2 carries the post-translational modification N-acetylserine. Over residues 9–25 (QAIAEEGGTEQETATPE) the composition is skewed to low complexity. A Phosphoserine modification is found at S33. Positions 40–53 (LELQRRLEAQNQER) are enriched in basic and acidic residues. S56 is modified (phosphoserine).

Interacts with CALM1. Phosphorylation at Ser-56 favors interaction with CALM1.

Its subcellular location is the cytoplasm. May act as a competitive inhibitor of calmodulin-dependent enzymes such as calcineurin in neurons. The polypeptide is cAMP-regulated phosphoprotein 21 (ARPP21) (Pongo abelii (Sumatran orangutan)).